The following is a 500-amino-acid chain: Inner membrane transporter YjeM (500 aa).

The Cytoplasmic portion of the chain corresponds to 1–7 (MPHTIKK). A helical membrane pass occupies residues 8–28 (MSLIGLILMIFTSVFGFANSP). At 29-37 (SAYYLMGYS) the chain is on the periplasmic side. The helical transmembrane segment at 38 to 58 (AIPFYIFSALLFFIPFALMMA) threads the bilayer. Over 59–82 (EMGAAYRKEEGGIYSWMNNSVGPR) the chain is Cytoplasmic. Residues 83 to 103 (FAFIGTFMWFSSYIIWMVSTS) form a helical membrane-spanning segment. The Periplasmic segment spans residues 104–132 (AKVWVPFSTFLYGSDMTQHWRIAGLEPTQ). A helical transmembrane segment spans residues 133–153 (VVGLLAVAWMILVTVVASKGI). Residues 154–163 (NKIARITAVG) lie on the Cytoplasmic side of the membrane. The helical transmembrane segment at 164–184 (GIAVMCLNLVLLLVSITILLL) threads the bilayer. The Periplasmic portion of the chain corresponds to 185–209 (NGGHFAQDINFLASPNPGYQSGLAM). A helical membrane pass occupies residues 210 to 230 (LSFVVFAIFAYGGIEAVGGLV). Over 231–243 (DKTENPEKNFAKG) the chain is Cytoplasmic. The chain crosses the membrane as a helical span at residues 244–264 (IVFAAIVISIGYSLAIFLWGV). The Periplasmic segment spans residues 265-319 (STNWQQVLSNGSVNLGNITYVLMKSLGMTLGNALHLSPEASLSLGVWFARITGLS). A helical membrane pass occupies residues 320-340 (MFLAYTGAFFTLCYSPLKAII). Topologically, residues 341–369 (QGTPKALWPEPMTRLNAMGMPSIAMWMQC) are cytoplasmic. Residues 370–390 (GLVTVFILLVSFGGGTASAFF) form a helical membrane-spanning segment. The Periplasmic portion of the chain corresponds to 391-394 (NKLT). Residues 395 to 415 (LMANVSMTLPYLFLALAFPFF) form a helical membrane-spanning segment. Over 416-433 (KARQDLDRPFVIFKTHLS) the chain is Cytoplasmic. Residues 434–454 (AMIATVVVVLVVTFANVFTII) traverse the membrane as a helical segment. Over 455–462 (QPVVEAGD) the chain is Periplasmic. Residues 463–483 (WDSTLWMIGGPVFFSLLAMAI) form a helical membrane-spanning segment. At 484–500 (YQNYCSRVAKNPQWAVE) the chain is on the cytoplasmic side.

The protein belongs to the amino acid-polyamine-organocation (APC) superfamily.

The protein resides in the cell inner membrane. The protein is Inner membrane transporter YjeM (yjeM) of Escherichia coli (strain K12).